We begin with the raw amino-acid sequence, 469 residues long: Ufm1-specific protease 2 (469 aa).

M1 is modified (N-acetylmethionine). Active-site residues include C302, D426, and H428.

The protein belongs to the peptidase C78 family.

It is found in the endoplasmic reticulum. The protein localises to the cytoplasm. It localises to the nucleus. Thiol-dependent isopeptidase that specifically cleaves UFM1, a ubiquitin-like modifier protein, from conjugated proteins, such as CD274/PD-L1, CYB5R3, DDRGK1, MRE11, RPL26/uL24, TRIP4 and RPL26/uL24. While it is also able to mediate the processing of UFM1 precursors, a prerequisite for conjugation reactions, UFSP2 mainly acts as a protein deUFMylase that mediates deconjugation of UFM1 from target proteins. Mediates deUFMylation of RPL26/uL24, a critical step to release the UFM1 ribosome E3 ligase (UREL) complex during the recycling of 60S ribosome subunits from the endoplasmic reticulum. Catalyzes deUFMylation of TRIP4, regulating intracellular nuclear receptors transactivation and thereby regulate cell proliferation and differentiation. This Pongo abelii (Sumatran orangutan) protein is Ufm1-specific protease 2.